We begin with the raw amino-acid sequence, 362 residues long: MAQIFNFSSGPAMLPAEVLEQAQQELRDWNGLGTSVMEVSHRGKEFIQVAEEAEKDFRDLLNVPSNYKVLFCHGGGRGQFAAVPLNILGDKTTADYVDAGYWAASAIKEAKKYCTPNVFDAKVTVDGLRAVKPMSEWQLSDNAAYMHYCPNETIDGIAIDETPDFGKDVVVAADFSSTILSRPIDVSRYGVIYAGAQKNIGPAGLTIVIVREDLLGKANIACPSILDYSILNDNDSMFNTPPTFAWYLSGLVFKWLKANGGVAAMDKINQQKAELLYGVIDNSDFYRNDVAKANRSRMNVPFQLADSALDKLFLEESFAAGLHALKGHRVVGGMRASIYNAMPLEGVKALTDFMVEFERRHG.

Positions 9 and 42 each coordinate L-glutamate. Residues 76 to 77 (GR), W102, T153, D174, and Q197 each bind pyridoxal 5'-phosphate. An N6-(pyridoxal phosphate)lysine modification is found at K198. Residue 239 to 240 (NT) participates in pyridoxal 5'-phosphate binding.

This sequence belongs to the class-V pyridoxal-phosphate-dependent aminotransferase family. SerC subfamily. As to quaternary structure, homodimer. Pyridoxal 5'-phosphate is required as a cofactor.

It is found in the cytoplasm. The catalysed reaction is O-phospho-L-serine + 2-oxoglutarate = 3-phosphooxypyruvate + L-glutamate. It carries out the reaction 4-(phosphooxy)-L-threonine + 2-oxoglutarate = (R)-3-hydroxy-2-oxo-4-phosphooxybutanoate + L-glutamate. It participates in amino-acid biosynthesis; L-serine biosynthesis; L-serine from 3-phospho-D-glycerate: step 2/3. Its pathway is cofactor biosynthesis; pyridoxine 5'-phosphate biosynthesis; pyridoxine 5'-phosphate from D-erythrose 4-phosphate: step 3/5. In terms of biological role, catalyzes the reversible conversion of 3-phosphohydroxypyruvate to phosphoserine and of 3-hydroxy-2-oxo-4-phosphonooxybutanoate to phosphohydroxythreonine. In Escherichia coli O1:K1 / APEC, this protein is Phosphoserine aminotransferase.